Consider the following 76-residue polypeptide: Conotoxin Cal5a L2 (76 aa).

The N-terminal stretch at 1 to 22 (MRFYIGLMAALMLTSILRTDSA) is a signal peptide. The propeptide occupies 23–42 (SVGQTGTKSELALIERVIRQ). Position 50 is a 4-hydroxyproline (P50). 3 positions are modified to 4-hydroxyproline; partial: P58, P62, and P64.

It belongs to the conotoxin T superfamily. Post-translationally, contains 2 disulfide bonds that can be either 'C1-C3, C2-C4' or 'C1-C4, C2-C3', since these disulfide connectivities have been observed for conotoxins with cysteine framework V (for examples, see AC P0DQQ7 and AC P81755). As to expression, expressed by the venom duct.

Its subcellular location is the secreted. Functionally, probable neurotoxin with unknown target. Possibly targets ion channels. This chain is Conotoxin Cal5a L2, found in Californiconus californicus (California cone).